Reading from the N-terminus, the 379-residue chain is Queuine tRNA-ribosyltransferase (379 aa).

D94 functions as the Proton acceptor in the catalytic mechanism. Residues 94-98 (DSGGF), D148, Q191, and G218 contribute to the substrate site. The RNA binding stretch occupies residues 249 to 255 (GVGSPDS). Residue D268 is the Nucleophile of the active site. Positions 273-277 (TRIAR) are RNA binding; important for wobble base 34 recognition. C306, C308, C311, and H337 together coordinate Zn(2+).

This sequence belongs to the queuine tRNA-ribosyltransferase family. Homodimer. Within each dimer, one monomer is responsible for RNA recognition and catalysis, while the other monomer binds to the replacement base PreQ1. Zn(2+) serves as cofactor.

It carries out the reaction 7-aminomethyl-7-carbaguanine + guanosine(34) in tRNA = 7-aminomethyl-7-carbaguanosine(34) in tRNA + guanine. The protein operates within tRNA modification; tRNA-queuosine biosynthesis. Its function is as follows. Catalyzes the base-exchange of a guanine (G) residue with the queuine precursor 7-aminomethyl-7-deazaguanine (PreQ1) at position 34 (anticodon wobble position) in tRNAs with GU(N) anticodons (tRNA-Asp, -Asn, -His and -Tyr). Catalysis occurs through a double-displacement mechanism. The nucleophile active site attacks the C1' of nucleotide 34 to detach the guanine base from the RNA, forming a covalent enzyme-RNA intermediate. The proton acceptor active site deprotonates the incoming PreQ1, allowing a nucleophilic attack on the C1' of the ribose to form the product. After dissociation, two additional enzymatic reactions on the tRNA convert PreQ1 to queuine (Q), resulting in the hypermodified nucleoside queuosine (7-(((4,5-cis-dihydroxy-2-cyclopenten-1-yl)amino)methyl)-7-deazaguanosine). The polypeptide is Queuine tRNA-ribosyltransferase (Bacillus anthracis (strain CDC 684 / NRRL 3495)).